A 495-amino-acid polypeptide reads, in one-letter code: Tubulin epsilon and delta complex protein 1 (495 aa).

Residues 355–387 (GGELDLVVRELQALEEELREAAERRRAAWEAKA) are a coiled coil. Residues 417-440 (CWERDGGPAQPHGPHRLVRREDGA) form a disordered region. Positions 452–480 (IRTLRSQEACLEAVLRRLQGQCRQELARL) form a coiled coil.

As to quaternary structure, interacts with TEDC2. Found in a complex with TEDC1, TEDC2, TUBE1 and TUBD1.

The protein resides in the cell projection. Its subcellular location is the cilium. It localises to the cytoplasm. It is found in the cytoskeleton. The protein localises to the microtubule organizing center. The protein resides in the centrosome. Its subcellular location is the centriole. In terms of biological role, acts as a positive regulator of ciliary hedgehog signaling. Required for centriole stability. May play a role in counteracting perturbation of actin filaments, such as after treatment with the actin depolymerizing microbial metabolite Chivosazole F. The protein is Tubulin epsilon and delta complex protein 1 of Homo sapiens (Human).